Reading from the N-terminus, the 336-residue chain is Calcium-gated potassium channel MthK (336 aa).

Over 1-20 the chain is Cytoplasmic; the sequence is MVLVIEIIRKHLPRVLKVPA. Residues 21 to 41 traverse the membrane as a helical segment; the sequence is TRILLLVLAVIIYGTAGFHFI. Residues 42–48 lie on the Extracellular side of the membrane; the sequence is EGESWTV. Residues 49–58 constitute an intramembrane region (helical; Pore-forming); that stretch reads SLYWTFVTIA. The pore-forming intramembrane region spans 59-64; that stretch reads TVGYGD. Positions 59-64 match the Selectivity filter motif; the sequence is TVGYGD. Residues 65 to 69 lie on the Extracellular side of the membrane; it reads YSPST. Residues 70 to 95 traverse the membrane as a helical segment; it reads PLGMYFTVTLIVLGIGTFAVAVERLL. The Cytoplasmic segment spans residues 96-106; that stretch reads EFLINREQMKL. One can recognise an RCK N-terminal domain in the interval 115–230; sequence SRHVVICGWS…RMAGADQVIS (116 aa). Residues Asp184, Glu210, and Glu212 each contribute to the Ca(2+) site. Residues 252 to 336 form the RCK C-terminal domain; the sequence is VQDVLAEEST…IERLKNYISA (85 aa).

Homotetramer.

The protein resides in the cell membrane. Functionally, calcium-gated potassium channel. The chain is Calcium-gated potassium channel MthK (mthK) from Methanothermobacter thermautotrophicus (strain ATCC 29096 / DSM 1053 / JCM 10044 / NBRC 100330 / Delta H) (Methanobacterium thermoautotrophicum).